The primary structure comprises 85 residues: Cytochrome c oxidase assembly factor 3, mitochondrial (85 aa).

Over 1-26 (MVLNPSKYQDTRTWKMTPAMIRARKP) the chain is Mitochondrial matrix. The chain crosses the membrane as a helical span at residues 27–49 (FFKGNMLGLTLLLGVTGSVYYYT). The Mitochondrial intermembrane portion of the chain corresponds to 50–85 (YHFLHKDNDFADVPIPPIDPQELEALKKEYEAKKKA).

This sequence belongs to the COA3 family. As to quaternary structure, component of 250-400 kDa complexes called cytochrome oxidase assembly intermediates or COA complexes composed at least COA3, COX14, COX5A, SHY1 and SSC1. Interacts with COX1 and MSS51.

Its subcellular location is the mitochondrion inner membrane. In terms of biological role, required for assembly of cytochrome c oxidase (complex IV). With COX14, negatively regulates COX1 translation and is involved in MSS51 association with newly synthesized COX1. The protein is Cytochrome c oxidase assembly factor 3, mitochondrial (COA3) of Saccharomyces cerevisiae (strain RM11-1a) (Baker's yeast).